A 271-amino-acid chain; its full sequence is Acyl-[acyl-carrier-protein]--UDP-N-acetylglucosamine O-acyltransferase (271 aa).

Belongs to the transferase hexapeptide repeat family. LpxA subfamily. Homotrimer.

Its subcellular location is the cytoplasm. The enzyme catalyses a (3R)-hydroxyacyl-[ACP] + UDP-N-acetyl-alpha-D-glucosamine = a UDP-3-O-[(3R)-3-hydroxyacyl]-N-acetyl-alpha-D-glucosamine + holo-[ACP]. Its pathway is glycolipid biosynthesis; lipid IV(A) biosynthesis; lipid IV(A) from (3R)-3-hydroxytetradecanoyl-[acyl-carrier-protein] and UDP-N-acetyl-alpha-D-glucosamine: step 1/6. Functionally, involved in the biosynthesis of lipid A, a phosphorylated glycolipid that anchors the lipopolysaccharide to the outer membrane of the cell. This chain is Acyl-[acyl-carrier-protein]--UDP-N-acetylglucosamine O-acyltransferase, found in Agrobacterium fabrum (strain C58 / ATCC 33970) (Agrobacterium tumefaciens (strain C58)).